A 198-amino-acid polypeptide reads, in one-letter code: Holliday junction resolvase RecU (198 aa).

The segment at 1 to 22 (MVNYPHKVSSQKRQTSLSQPKN) is disordered. A compositionally biased stretch (polar residues) spans 11 to 22 (QKRQTSLSQPKN). Mg(2+)-binding residues include T81, D83, E96, and Q115.

Belongs to the RecU family. Requires Mg(2+) as cofactor.

It is found in the cytoplasm. The enzyme catalyses Endonucleolytic cleavage at a junction such as a reciprocal single-stranded crossover between two homologous DNA duplexes (Holliday junction).. In terms of biological role, endonuclease that resolves Holliday junction intermediates in genetic recombination. Cleaves mobile four-strand junctions by introducing symmetrical nicks in paired strands. Promotes annealing of linear ssDNA with homologous dsDNA. Required for DNA repair, homologous recombination and chromosome segregation. The sequence is that of Holliday junction resolvase RecU from Streptococcus pneumoniae (strain P1031).